We begin with the raw amino-acid sequence, 614 residues long: Asparagine synthetase [glutamine-hydrolyzing] 3 (614 aa).

C2 serves as the catalytic For GATase activity. The Glutamine amidotransferase type-2 domain occupies 2-216; sequence CGITGWVDFK…PAHALTFSKD (215 aa). L-glutamine is bound by residues 50–54, 77–79, and D102; these read RLAVV and NGE. Residue 377–378 coordinates ATP; it reads SG.

The protein belongs to the asparagine synthetase family.

The catalysed reaction is L-aspartate + L-glutamine + ATP + H2O = L-asparagine + L-glutamate + AMP + diphosphate + H(+). Its pathway is amino-acid biosynthesis; L-asparagine biosynthesis; L-asparagine from L-aspartate (L-Gln route): step 1/1. Functionally, asparagine synthetase involved in sporulation. This chain is Asparagine synthetase [glutamine-hydrolyzing] 3 (asnO), found in Bacillus subtilis (strain 168).